The following is a 179-amino-acid chain: Segregation and condensation protein B (179 aa).

Belongs to the ScpB family. Homodimer. Homodimerization may be required to stabilize the binding of ScpA to the Smc head domains. Component of a cohesin-like complex composed of ScpA, ScpB and the Smc homodimer, in which ScpA and ScpB bind to the head domain of Smc. The presence of the three proteins is required for the association of the complex with DNA.

Its subcellular location is the cytoplasm. Its function is as follows. Participates in chromosomal partition during cell division. May act via the formation of a condensin-like complex containing Smc and ScpA that pull DNA away from mid-cell into both cell halves. The sequence is that of Segregation and condensation protein B from Clostridioides difficile (strain 630) (Peptoclostridium difficile).